The primary structure comprises 546 residues: (+)-epi-alpha-bisabolol synthase (546 aa).

The Mg(2+) site is built by Asp-297, Asp-301, Asp-441, Thr-445, and Glu-449. The DDXXD motif motif lies at 297-301; sequence DDIYD.

Belongs to the terpene synthase family. Mg(2+) serves as cofactor.

The catalysed reaction is (2E,6E)-farnesyl diphosphate + H2O = (+)-epi-alpha-bisabolol + diphosphate. Its pathway is secondary metabolite biosynthesis; terpenoid biosynthesis. In terms of biological role, sesquiterpene synthase involved in the biosynthesis of (+)-epi-alpha-bisabolol, a precursor of the natural sweetner hernandulcin. This chain is (+)-epi-alpha-bisabolol synthase, found in Phyla dulcis (Aztec sweet herb).